An 82-amino-acid polypeptide reads, in one-letter code: Small ribosomal subunit protein bS16 (82 aa).

The protein belongs to the bacterial ribosomal protein bS16 family.

In Francisella tularensis subsp. holarctica (strain FTNF002-00 / FTA), this protein is Small ribosomal subunit protein bS16.